A 354-amino-acid chain; its full sequence is MITLDYRNKENVEVDSSLHNESRSASAFRSKKEARRYWIVLITLIALGLLSSYGLLVYNNPVPIDSPSFIPVVKRRIVAIVAMIIAAVCHSLSTVAFQSITNNKIITPSLLGFESLYSAIQTSTVFFFGASALINFNGIGSFLFQVVVMVFMSLILYGWLLSGKYGNLQLMLLVGIIIGTGLNSVSTFMRKLLAPSEFDILQARLFGSVNHADPAYFPIVIPMIIIVAVLIFAHSKNLNVLSLGKDVATSFGVKYQPSVIYTLVLVAILMSISTALIGPLTFYGFLVATLSYQAAATYDHRYIFPMAFAIGFLIMTSAYFLMYHVFHAQGVVSVIIELFGGIIFLTIVLRKRAL.

A run of 9 helical transmembrane segments spans residues 37-57 (YWIV…GLLV), 77-97 (IVAI…TVAF), 116-136 (LYSA…LINF), 141-161 (SFLF…GWLL), 168-188 (LQLM…VSTF), 214-234 (PAYF…IFAH), 259-279 (VIYT…LIGP), 302-322 (YIFP…YFLM), and 329-349 (QGVV…TIVL).

Belongs to the binding-protein-dependent transport system permease family. FecCD subfamily. As to quaternary structure, the complex is composed of two ATP-binding proteins (FatE), two transmembrane proteins (FatC and FatD) and a solute-binding protein (FpuA).

The protein resides in the cell membrane. Its function is as follows. Part of an ABC transporter complex involved in ferric-petrobactin uptake. Probably responsible for the translocation of the substrate across the membrane. This chain is Petrobactin import system permease protein FatC, found in Bacillus anthracis.